Reading from the N-terminus, the 219-residue chain is Protein-L-isoaspartate O-methyltransferase (219 aa).

The active site involves Ser66.

It belongs to the methyltransferase superfamily. L-isoaspartyl/D-aspartyl protein methyltransferase family.

The protein localises to the cytoplasm. It catalyses the reaction [protein]-L-isoaspartate + S-adenosyl-L-methionine = [protein]-L-isoaspartate alpha-methyl ester + S-adenosyl-L-homocysteine. Catalyzes the methyl esterification of L-isoaspartyl residues in peptides and proteins that result from spontaneous decomposition of normal L-aspartyl and L-asparaginyl residues. It plays a role in the repair and/or degradation of damaged proteins. This Xanthobacter autotrophicus (strain ATCC BAA-1158 / Py2) protein is Protein-L-isoaspartate O-methyltransferase.